The following is a 512-amino-acid chain: Probable anion transporter 3, chloroplastic (512 aa).

Residues 1–44 constitute a chloroplast transit peptide; sequence MATVGSLKPLHHSSCSSSFPRNPIVNRKALLGFVFDSARKNQIR. The next 12 helical transmembrane spans lie at 102–124, 139–159, 167–187, 191–211, 228–248, 250–270, 324–344, 359–379, 396–416, 422–442, 462–482, and 486–506; these read VILTACMMCLCNADRVVMSVAVV, VVQSSFLWGYIFSSVIGGALV, VLAWGVALWSLATLLTPWAAA, LALLCVRAFFGLAEGVAMPSM, VGISMAGFHMGNVVGLLLTPL, LSSIGISGPFILFASLGLLWV, WAIIFANVTNNWGYFVLLSWM, AAWFSALPWATMAISGYYAGA, KIMQSIGFMGPGLSLLCLNFA, AAVFMTIALSLSSFSQAGFLL, AGTLAAIVSTIGTGYFVQWLG, and AFLTVTAFLYFATTVFWLLFA.

The protein belongs to the major facilitator superfamily. Sodium/anion cotransporter (TC 2.A.1.14) family. As to expression, expressed in roots.

The protein resides in the plastid. The protein localises to the chloroplast membrane. Functionally, inorganic phosphate and probable anion transporter. The sequence is that of Probable anion transporter 3, chloroplastic (ANTR3) from Arabidopsis thaliana (Mouse-ear cress).